A 349-amino-acid chain; its full sequence is DNA integrity scanning protein DisA (349 aa).

Positions 3 to 143 (KQDLMDIIVK…LKYRLKNFDE (141 aa)) constitute a DAC domain. ATP is bound by residues Gly-70, Val-88, and 101-105 (TRHRT).

This sequence belongs to the DisA family. In terms of assembly, homooctamer. It depends on Mg(2+) as a cofactor.

It catalyses the reaction 2 ATP = 3',3'-c-di-AMP + 2 diphosphate. Functionally, participates in a DNA-damage check-point. DisA forms globular foci that rapidly scan along the chromosomes searching for lesions. Its function is as follows. Also has diadenylate cyclase activity, catalyzing the condensation of 2 ATP molecules into cyclic di-AMP (c-di-AMP). c-di-AMP likely acts as a signaling molecule that may couple DNA integrity with a cellular process. The protein is DNA integrity scanning protein DisA of Fusobacterium nucleatum subsp. nucleatum (strain ATCC 25586 / DSM 15643 / BCRC 10681 / CIP 101130 / JCM 8532 / KCTC 2640 / LMG 13131 / VPI 4355).